The sequence spans 22 residues: GVFLDALKKFAKGGMNAVLNPK.

Expressed by the skin glands.

The protein localises to the secreted. Has very strong antimicrobial activity against Gram-positive bacterium S.aureus and yeast C.albicans, and very weak activity against Gram-negative bacterium E.coli. Has strong hemolytic activity against human red blood cells. The chain is Antimicrobial peptide 4 from Xenopus tropicalis (Western clawed frog).